Reading from the N-terminus, the 281-residue chain is Pantothenate synthetase (281 aa).

30–37 (MGYLHEGH) contributes to the ATP binding site. The Proton donor role is filled by histidine 37. Residue glutamine 61 participates in (R)-pantoate binding. Glutamine 61 is a beta-alanine binding site. Position 147 to 150 (147 to 150 (GEKD)) interacts with ATP. Glutamine 153 lines the (R)-pantoate pocket. ATP is bound by residues isoleucine 176 and 184–187 (KSSR).

The protein belongs to the pantothenate synthetase family. As to quaternary structure, homodimer.

The protein resides in the cytoplasm. It carries out the reaction (R)-pantoate + beta-alanine + ATP = (R)-pantothenate + AMP + diphosphate + H(+). It functions in the pathway cofactor biosynthesis; (R)-pantothenate biosynthesis; (R)-pantothenate from (R)-pantoate and beta-alanine: step 1/1. Its function is as follows. Catalyzes the condensation of pantoate with beta-alanine in an ATP-dependent reaction via a pantoyl-adenylate intermediate. This chain is Pantothenate synthetase, found in Clostridium botulinum (strain 657 / Type Ba4).